The following is a 112-amino-acid chain: UPF0122 protein CPF_1968 (112 aa).

It belongs to the UPF0122 family.

Its function is as follows. Might take part in the signal recognition particle (SRP) pathway. This is inferred from the conservation of its genetic proximity to ftsY/ffh. May be a regulatory protein. The polypeptide is UPF0122 protein CPF_1968 (Clostridium perfringens (strain ATCC 13124 / DSM 756 / JCM 1290 / NCIMB 6125 / NCTC 8237 / Type A)).